The sequence spans 355 residues: Cell surface glycoprotein CD200 receptor 1 (355 aa).

An N-terminal signal peptide occupies residues 1–26 (MPCTWITSDLQLRLILTLFFVAECLS). Residues 27-267 (AGMEGTKTSN…QGAEIPAHLK (241 aa)) lie on the Extracellular side of the membrane. A compositionally biased stretch (polar residues) spans 35–55 (SNNSMQQLDNGNHSSVSTTSS). The disordered stretch occupies residues 35–56 (SNNSMQQLDNGNHSSVSTTSST). Residues Asn46, Asn123, and Asn153 are each glycosylated (N-linked (GlcNAc...) asparagine). 4 cysteine pairs are disulfide-bonded: Cys85/Cys156, Cys108/Cys124, Cys191/Cys241, and Cys210/Cys229. Residues 139 to 257 (PALQVDPVAI…GNKSLSIQLS (119 aa)) enclose the Ig-like C2-type domain. The helical transmembrane segment at 268–288 (NLYITAPIFIILIVVGSIWLL) threads the bilayer. At 289 to 355 (KISGCRKCKL…NLHTIYVPRV (67 aa)) the chain is on the cytoplasmic side.

This sequence belongs to the CD200R family. CD200 and CD200R1 interact via their respective N-terminal Ig-like domains.

The protein localises to the cell membrane. Its function is as follows. Inhibitory receptor for the CD200/OX2 cell surface glycoprotein. Limits inflammation by inhibiting the expression of pro-inflammatory molecules including TNF-alpha, interferons, and inducible nitric oxide synthase (iNOS) in response to selected stimuli. The polypeptide is Cell surface glycoprotein CD200 receptor 1 (CD200R1) (Bos taurus (Bovine)).